We begin with the raw amino-acid sequence, 237 residues long: Ribonuclease PH (237 aa).

Phosphate-binding positions include Arg86 and 124 to 126 (GTR).

This sequence belongs to the RNase PH family. As to quaternary structure, homohexameric ring arranged as a trimer of dimers.

The enzyme catalyses tRNA(n+1) + phosphate = tRNA(n) + a ribonucleoside 5'-diphosphate. Functionally, phosphorolytic 3'-5' exoribonuclease that plays an important role in tRNA 3'-end maturation. Removes nucleotide residues following the 3'-CCA terminus of tRNAs; can also add nucleotides to the ends of RNA molecules by using nucleoside diphosphates as substrates, but this may not be physiologically important. Probably plays a role in initiation of 16S rRNA degradation (leading to ribosome degradation) during starvation. The polypeptide is Ribonuclease PH (Shewanella frigidimarina (strain NCIMB 400)).